Here is a 382-residue protein sequence, read N- to C-terminus: Ribosomal RNA large subunit methyltransferase G (382 aa).

Belongs to the methyltransferase superfamily. RlmG family.

The protein localises to the cytoplasm. The enzyme catalyses guanosine(1835) in 23S rRNA + S-adenosyl-L-methionine = N(2)-methylguanosine(1835) in 23S rRNA + S-adenosyl-L-homocysteine + H(+). Its function is as follows. Specifically methylates the guanine in position 1835 (m2G1835) of 23S rRNA. The polypeptide is Ribosomal RNA large subunit methyltransferase G (Aliivibrio fischeri (strain ATCC 700601 / ES114) (Vibrio fischeri)).